The chain runs to 948 residues: Isoleucine--tRNA ligase (948 aa).

The short motif at 58 to 68 (PYANGSIHIGH) is the 'HIGH' region element. An L-isoleucyl-5'-AMP-binding site is contributed by Glu-572. Residues 613–617 (KMSKS) carry the 'KMSKS' region motif. ATP is bound at residue Lys-616. Zn(2+) contacts are provided by Cys-911, Cys-914, Cys-931, and Cys-934.

It belongs to the class-I aminoacyl-tRNA synthetase family. IleS type 1 subfamily. As to quaternary structure, monomer. It depends on Zn(2+) as a cofactor.

The protein localises to the cytoplasm. The catalysed reaction is tRNA(Ile) + L-isoleucine + ATP = L-isoleucyl-tRNA(Ile) + AMP + diphosphate. Its function is as follows. Catalyzes the attachment of isoleucine to tRNA(Ile). As IleRS can inadvertently accommodate and process structurally similar amino acids such as valine, to avoid such errors it has two additional distinct tRNA(Ile)-dependent editing activities. One activity is designated as 'pretransfer' editing and involves the hydrolysis of activated Val-AMP. The other activity is designated 'posttransfer' editing and involves deacylation of mischarged Val-tRNA(Ile). In Edwardsiella ictaluri (strain 93-146), this protein is Isoleucine--tRNA ligase.